We begin with the raw amino-acid sequence, 132 residues long: Large ribosomal subunit protein uL14 (132 aa).

It belongs to the universal ribosomal protein uL14 family. As to quaternary structure, part of the 50S ribosomal subunit. Forms a cluster with proteins L3 and L24e, part of which may contact the 16S rRNA in 2 intersubunit bridges.

Its function is as follows. Binds to 23S rRNA. Forms part of two intersubunit bridges in the 70S ribosome. The sequence is that of Large ribosomal subunit protein uL14 from Methanoregula boonei (strain DSM 21154 / JCM 14090 / 6A8).